The chain runs to 360 residues: MLPQEKLDLILRRYDEVSARLNEAVEPALYVQLSREFAGLEQVAAAIRDYRSQMQEVEGLAAMLADPTTDSEMRGLAEEELRDAKERLEALEHQLKIALLPKDAADERSAILEVRAGTGGDEAALFAGDLFRMYQRYAESKGWSVEIISANEGAAGGFKEIIAEIAGRGVFAKLKFESGAHRVQRVPDTETQGRIHTSAATVAVLPEAQEVDVEINEADLKIDTMRAQGAGGQHVNKTESAIRITHIPTGTIVFVQDERSQHKNRARAMALLRSRIYDEQRQKLDAERAADRRSQVGSGDRSERIRTYNFPQGRVTDHRINLTLYKLDKVITGEALDEVIDALTTHHQAALLADSESGGL.

Glutamine 233 is subject to N5-methylglutamine. Residues 283-305 (KLDAERAADRRSQVGSGDRSERI) form a disordered region.

It belongs to the prokaryotic/mitochondrial release factor family. Methylated by PrmC. Methylation increases the termination efficiency of RF1.

It is found in the cytoplasm. Its function is as follows. Peptide chain release factor 1 directs the termination of translation in response to the peptide chain termination codons UAG and UAA. The sequence is that of Peptide chain release factor 1 from Methylocella silvestris (strain DSM 15510 / CIP 108128 / LMG 27833 / NCIMB 13906 / BL2).